Consider the following 348-residue polypeptide: Rhodopsin (348 aa).

Methionine 1 bears the N-acetylmethionine mark. At 1-36 (MNGTEGPNFYVPFSNKTGVVRSPFEAPQYYLAEPWQ) the chain is on the extracellular side. N-linked (GlcNAc...) asparagine glycosylation is found at asparagine 2 and asparagine 15. The chain crosses the membrane as a helical span at residues 37-61 (FSMLAAYMFLLIVLGFPINFLTLYV). Over 62–73 (TVQHKKLRTPLN) the chain is Cytoplasmic. Residues 74–96 (YILLNLAVADLFMVFGGFTTTLY) traverse the membrane as a helical segment. Residues 97–110 (TSLHGYFVFGPTGC) lie on the Extracellular side of the membrane. An intrachain disulfide couples cysteine 110 to cysteine 187. Residues 111-133 (NLEGFFATLGGEIALWSLVVLAI) traverse the membrane as a helical segment. The short motif at 134 to 136 (ERY) is the 'Ionic lock' involved in activated form stabilization element. Residues 134 to 152 (ERYVVVCKPMSNFRFGENH) are Cytoplasmic-facing. Residues 153 to 173 (AIMGVAFTWVMALACAAPPLV) traverse the membrane as a helical segment. The Extracellular segment spans residues 174–202 (GWSRYIPQGMQCSCGALYFTLKPEINNES). Residue glutamate 201 coordinates Zn(2+). The helical transmembrane segment at 203–224 (FVIYMFVVHFSIPLIVIFFCYG) threads the bilayer. The Cytoplasmic portion of the chain corresponds to 225 to 252 (QLVFTVKEAAAQQQESATTQKAEKEVTR). The chain crosses the membrane as a helical span at residues 253–274 (MVIIMVIAFLICWLPYAGVAFY). Over 275–286 (IFTHQGSDFGPI) the chain is Extracellular. Glutamine 279 contacts Zn(2+). The helical transmembrane segment at 287-308 (FMTIPAFFAKSSSVYNPVIYIM) threads the bilayer. N6-(retinylidene)lysine is present on lysine 296. Residues 309–348 (MNKQFRNCMLTTLCCGKNPLGDDEASTTVSKTETSQVAPA) lie on the Cytoplasmic side of the membrane. S-palmitoyl cysteine attachment occurs at residues cysteine 322 and cysteine 323. The interval 330-348 (DDEASTTVSKTETSQVAPA) is interaction with SAG. Serine 334 is modified (phosphoserine). At serine 334 the chain carries Phosphoserine; by RK and GRK7. 2 positions are modified to phosphothreonine: threonine 335 and threonine 336. A phosphothreonine; by RK and GRK7 mark is found at threonine 335 and threonine 336. Serine 338 is subject to Phosphoserine; by RK and GRK7. 2 positions are modified to phosphothreonine: threonine 340 and threonine 342. Serine 343 bears the Phosphoserine; by RK and GRK7 mark.

It belongs to the G-protein coupled receptor 1 family. Opsin subfamily. Homodimer. May form a complex composed of RHO, GRK1 and RCVRN in a Ca(2+)-dependent manner; RCVRN prevents the interaction between GRK1 and RHO. Interacts with GRK1. Interacts (phosphorylated form) with SAG. Interacts with GNAT1. Interacts with GNAT3. SAG and G-proteins compete for a common binding site. Interacts with PRCD; the interaction promotes PRCD stability. Forms a complex with ASAP1 and ARF4. Forms a complex with ASAP1, RAB11A, Rabin8/RAB3IP, ARF4 and RAB11FIP3; the complex regulates Golgi-to-cilia rhodopsin/RHO transport in photoreceptors. In terms of processing, phosphorylated on some or all of the serine and threonine residues present in the C-terminal region. Post-translationally, contains one covalently linked retinal chromophore. Upon light absorption, the covalently bound 11-cis-retinal is converted to all-trans-retinal. After hydrolysis of the Schiff base and release of the covalently bound all-trans-retinal, active rhodopsin is regenerated by binding of a fresh molecule of 11-cis-retinal.

The protein resides in the membrane. Its subcellular location is the cell projection. It is found in the cilium. It localises to the photoreceptor outer segment. Functionally, photoreceptor required for image-forming vision at low light intensity. Required for photoreceptor cell viability after birth. Light-induced isomerization of 11-cis to all-trans retinal triggers a conformational change that activates signaling via G-proteins. Subsequent receptor phosphorylation mediates displacement of the bound G-protein alpha subunit by the arrestin SAG and terminates signaling. The protein is Rhodopsin (RHO) of Ovis aries (Sheep).